A 561-amino-acid polypeptide reads, in one-letter code: MTPALAAGLQVVFVLAVLAVAYVPVGDYMARVYESRRHLRVESVLYRLCRIDPHAEQTWYGYAGSVLGFSAASVLFLYALQRIQGVLPLSGDLSGVSPAVAFNTAVSFVTNTNWQSYAPETTMSNLTQPVGLAVQNFVSAAVGMAVAVALIRGFVRVSRGGEIGNFWVDLTRGSLRILLPFSFVIALILLSQGVIQSFHPGFASTGLDGNSVTNALAPVASQEAIKELGTNGGGILAANSAHPFENPTPVSNIVEILAILLIPVSLTRTFGTMVGERKQGLTLLAVMGILWGSLLAVTLAAESGRRGVAATAAGAMMEGKEVRFGIPGTALFAVSTTGTSTGAVNSAHDSLSPLGGGAVLLNMLLGEIAPGGVGTGLYGILVLALIAVFVGGLLVGRTPEYLGKKLRQREITLAALSVLVMPALVLIGTGITVILSSTTGYQGNSGDPGSPGSIHGFSEVLYAFASASNNNGSAFGGLTVTSDWFQTALGLCMLFGRFLPIIFVLALAGSLASQKKTAAGTGTLPTAGPMFTGLLTGTVVLVAALTFFPALALGPIAEALQ.

The next 12 helical transmembrane spans lie at 5–25 (LAAG…YVPV), 60–80 (YGYA…LYAL), 86–106 (VLPL…NTAV), 131–151 (GLAV…VALI), 177–197 (ILLP…VIQS), 247–267 (PTPV…VSLT), 281–301 (LTLL…TLAA), 324–344 (FGIP…TGAV), 376–396 (GLYG…LLVG), 415–435 (ALSV…TVIL), 488–508 (ALGL…LALA), and 537–557 (GTVV…GPIA).

The protein belongs to the KdpA family. The system is composed of three essential subunits: KdpA, KdpB and KdpC.

Its subcellular location is the cell membrane. Functionally, part of the high-affinity ATP-driven potassium transport (or Kdp) system, which catalyzes the hydrolysis of ATP coupled with the electrogenic transport of potassium into the cytoplasm. This subunit binds the extracellular potassium ions and delivers the ions to the membrane domain of KdpB through an intramembrane tunnel. This chain is Potassium-transporting ATPase potassium-binding subunit, found in Rhodococcus opacus (strain B4).